Reading from the N-terminus, the 253-residue chain is Imidazole glycerol phosphate synthase subunit HisF (253 aa).

Residues aspartate 11 and aspartate 130 contribute to the active site.

It belongs to the HisA/HisF family. As to quaternary structure, heterodimer of HisH and HisF.

Its subcellular location is the cytoplasm. It catalyses the reaction 5-[(5-phospho-1-deoxy-D-ribulos-1-ylimino)methylamino]-1-(5-phospho-beta-D-ribosyl)imidazole-4-carboxamide + L-glutamine = D-erythro-1-(imidazol-4-yl)glycerol 3-phosphate + 5-amino-1-(5-phospho-beta-D-ribosyl)imidazole-4-carboxamide + L-glutamate + H(+). The protein operates within amino-acid biosynthesis; L-histidine biosynthesis; L-histidine from 5-phospho-alpha-D-ribose 1-diphosphate: step 5/9. Its function is as follows. IGPS catalyzes the conversion of PRFAR and glutamine to IGP, AICAR and glutamate. The HisF subunit catalyzes the cyclization activity that produces IGP and AICAR from PRFAR using the ammonia provided by the HisH subunit. This chain is Imidazole glycerol phosphate synthase subunit HisF, found in Lysinibacillus sphaericus (strain C3-41).